Here is a 291-residue protein sequence, read N- to C-terminus: N-acetylmannosamine kinase (291 aa).

ATP contacts are provided by residues A5–K12 and G132–S139. Residues H156, C166, C168, and C173 each contribute to the Zn(2+) site.

This sequence belongs to the ROK (NagC/XylR) family. NanK subfamily. Homodimer.

The catalysed reaction is an N-acyl-D-mannosamine + ATP = an N-acyl-D-mannosamine 6-phosphate + ADP + H(+). It participates in amino-sugar metabolism; N-acetylneuraminate degradation; D-fructose 6-phosphate from N-acetylneuraminate: step 2/5. Functionally, catalyzes the phosphorylation of N-acetylmannosamine (ManNAc) to ManNAc-6-P. This chain is N-acetylmannosamine kinase, found in Shigella boydii serotype 18 (strain CDC 3083-94 / BS512).